We begin with the raw amino-acid sequence, 276 residues long: Putative metal-binding protein CT_415 (276 aa).

Residues 1-18 form the signal peptide; it reads MRLLFLLLFSLGITCSYG. 4 residues coordinate a divalent metal cation: histidine 59, histidine 121, histidine 185, and aspartate 256.

This sequence belongs to the bacterial solute-binding protein 9 family.

It is found in the periplasm. Functionally, part of an ATP-binding cassette (ABC) transport system involved in metal import. Binds a metal with high affinity and specificity and delivers it to the membrane permease for translocation into the cytoplasm. The sequence is that of Putative metal-binding protein CT_415 from Chlamydia trachomatis serovar D (strain ATCC VR-885 / DSM 19411 / UW-3/Cx).